Here is a 779-residue protein sequence, read N- to C-terminus: Lysosome membrane protein 2-A (779 aa).

Residues 1-17 (MVKRGCCHRKMVNHKGC) lie on the Cytoplasmic side of the membrane. A helical transmembrane segment spans residues 18–38 (LVSGIFLAVIGAVLFILAFAL). Residues 39–732 (LPHLINQTTQ…LLNSQFKLIK (694 aa)) are Lumenal-facing. Residues Asn-44, Asn-86, Asn-95, Asn-114, Asn-117, Asn-201, Asn-239, Asn-262, Asn-266, Asn-277, Asn-369, Asn-410, Asn-440, Asn-508, Asn-543, Asn-601, Asn-619, Asn-651, and Asn-693 are each glycosylated (N-linked (GlcNAc...) asparagine). A helical membrane pass occupies residues 733 to 753 (ILGFVPVIVVSIIGGIILIAG). At 754 to 779 (ISMFAFGFKKLRQQKQQGYQAIINNE) the chain is on the cytoplasmic side. The Tyrosine-type lysosomal sorting signal motif lies at 771–774 (GYQA).

Belongs to the CD36 family. Heavily glycosylated.

Its subcellular location is the lysosome membrane. Its function is as follows. May act as a lysosomal receptor. May be involved in macropinocytosis and fluid phase exocytosis. Binds to the anionic phospholipid phosphoinositol 4,5-bisphosphate, but not to phosphatidylcholine and only weakly to phosphatidylserine. The polypeptide is Lysosome membrane protein 2-A (lmpA) (Dictyostelium discoideum (Social amoeba)).